Here is a 179-residue protein sequence, read N- to C-terminus: ATP-dependent protease subunit HslV (179 aa).

The active site involves threonine 6. Positions 164, 167, and 170 each coordinate Na(+).

This sequence belongs to the peptidase T1B family. HslV subfamily. As to quaternary structure, a double ring-shaped homohexamer of HslV is capped on each side by a ring-shaped HslU homohexamer. The assembly of the HslU/HslV complex is dependent on binding of ATP.

The protein localises to the cytoplasm. It catalyses the reaction ATP-dependent cleavage of peptide bonds with broad specificity.. Its activity is regulated as follows. Allosterically activated by HslU binding. Functionally, protease subunit of a proteasome-like degradation complex believed to be a general protein degrading machinery. This is ATP-dependent protease subunit HslV from Listeria monocytogenes serotype 4b (strain CLIP80459).